The following is an 817-amino-acid chain: Dynamin-related protein 5A (817 aa).

Residues 1–20 (MANSNTYLTTPTKTPSSRRN) are compositionally biased toward polar residues. Residues 1 to 37 (MANSNTYLTTPTKTPSSRRNQQSQSKMQSHSKDPINA) form a disordered region. Residues 59 to 346 (KLPIPEIVAI…LQKRYKEAAP (288 aa)) enclose the Dynamin-type G domain. The interval 69 to 76 (GGQSDGKS) is G1 motif. A GTP-binding site is contributed by 69–76 (GGQSDGKS). The interval 95–97 (GTR) is G2 motif. Positions 175-178 (DTPG) are G3 motif. Residues 175 to 179 (DTPGF) and 244 to 247 (SKFD) contribute to the GTP site. Residues 244–247 (SKFD) form a G4 motif region. The G5 motif stretch occupies residues 280–283 (LPKD). Disordered stretches follow at residues 405 to 425 (APEQ…IGSW) and 616 to 658 (LSDT…ETPS). Residues 618–629 (DTSRDEPMKDQE) show a composition bias toward basic and acidic residues.

Belongs to the TRAFAC class dynamin-like GTPase superfamily. Dynamin/Fzo/YdjA family. Expressed in root and leaf meristems.

The protein localises to the cytoplasm. It localises to the cytoskeleton. It is found in the phragmoplast. Functionally, probable microtubule-associated force-producing protein that is targeted to the forming cell plate during cytokinesis. May play a role in cell division. The chain is Dynamin-related protein 5A (DRP5A) from Arabidopsis thaliana (Mouse-ear cress).